Here is a 62-residue protein sequence, read N- to C-terminus: Photosystem II reaction center protein Z (62 aa).

2 consecutive transmembrane segments (helical) span residues 8 to 28 (ALFA…VAFA) and 41 to 61 (FQGV…NSLV).

It belongs to the PsbZ family. PSII is composed of 1 copy each of membrane proteins PsbA, PsbB, PsbC, PsbD, PsbE, PsbF, PsbH, PsbI, PsbJ, PsbK, PsbL, PsbM, PsbT, PsbY, PsbZ, Psb30/Ycf12, at least 3 peripheral proteins of the oxygen-evolving complex and a large number of cofactors. It forms dimeric complexes.

The protein localises to the plastid. The protein resides in the chloroplast thylakoid membrane. May control the interaction of photosystem II (PSII) cores with the light-harvesting antenna, regulates electron flow through the 2 photosystem reaction centers. PSII is a light-driven water plastoquinone oxidoreductase, using light energy to abstract electrons from H(2)O, generating a proton gradient subsequently used for ATP formation. In Nephroselmis olivacea (Green alga), this protein is Photosystem II reaction center protein Z.